We begin with the raw amino-acid sequence, 460 residues long: Putative type II methyltransferase M.OihORF3336P (460 aa).

Positions 15-458 (PEVVDLFSGC…EAMKKNIQGG (444 aa)) constitute an SAM-dependent MTase C5-type domain. Residue Cys97 is part of the active site.

Belongs to the class I-like SAM-binding methyltransferase superfamily. C5-methyltransferase family.

It catalyses the reaction a 2'-deoxycytidine in DNA + S-adenosyl-L-methionine = a 5-methyl-2'-deoxycytidine in DNA + S-adenosyl-L-homocysteine + H(+). Functionally, a methylase, recognizes the double-stranded sequence 5'-ACCGGT-3', methylates C-? on both strands. No endonuclease has been identified for this methylase. This Oceanobacillus iheyensis (strain DSM 14371 / CIP 107618 / JCM 11309 / KCTC 3954 / HTE831) protein is Putative type II methyltransferase M.OihORF3336P.